Reading from the N-terminus, the 276-residue chain is Probable endonuclease 4 (276 aa).

Zn(2+)-binding residues include histidine 65, histidine 105, glutamate 141, aspartate 175, histidine 178, histidine 210, aspartate 223, histidine 225, and glutamate 255.

This sequence belongs to the AP endonuclease 2 family. It depends on Zn(2+) as a cofactor.

It carries out the reaction Endonucleolytic cleavage to 5'-phosphooligonucleotide end-products.. Functionally, endonuclease IV plays a role in DNA repair. It cleaves phosphodiester bonds at apurinic or apyrimidinic (AP) sites, generating a 3'-hydroxyl group and a 5'-terminal sugar phosphate. The protein is Probable endonuclease 4 of Symbiobacterium thermophilum (strain DSM 24528 / JCM 14929 / IAM 14863 / T).